The following is a 209-amino-acid chain: Ribosomal RNA large subunit methyltransferase E (209 aa).

S-adenosyl-L-methionine contacts are provided by glycine 63, tryptophan 65, aspartate 83, aspartate 99, and aspartate 124. Lysine 164 functions as the Proton acceptor in the catalytic mechanism.

This sequence belongs to the class I-like SAM-binding methyltransferase superfamily. RNA methyltransferase RlmE family.

It localises to the cytoplasm. The catalysed reaction is uridine(2552) in 23S rRNA + S-adenosyl-L-methionine = 2'-O-methyluridine(2552) in 23S rRNA + S-adenosyl-L-homocysteine + H(+). Specifically methylates the uridine in position 2552 of 23S rRNA at the 2'-O position of the ribose in the fully assembled 50S ribosomal subunit. The protein is Ribosomal RNA large subunit methyltransferase E of Photorhabdus laumondii subsp. laumondii (strain DSM 15139 / CIP 105565 / TT01) (Photorhabdus luminescens subsp. laumondii).